Consider the following 123-residue polypeptide: Protein Wnt-7a (123 aa).

The O-palmitoleoyl serine; by PORCN moiety is linked to residue Ser-1. Residues 33 to 61 (VEPVRASRNKRPTFLKIKKPLSYRKPMDT) are disordered linker. A disulfide bridge links Cys-89 with Cys-104. Asn-90 is a glycosylation site (N-linked (GlcNAc...) asparagine).

Belongs to the Wnt family. As to quaternary structure, forms a soluble 1:1 complex with AFM; this prevents oligomerization and is required for prolonged biological activity. The complex with AFM may represent the physiological form in body fluids. Interacts with FZD5. Interacts with PORCN. In terms of processing, palmitoleoylation is required for efficient binding to frizzled receptors. Depalmitoleoylation leads to Wnt signaling pathway inhibition.

The protein resides in the secreted. It localises to the extracellular space. Its subcellular location is the extracellular matrix. Its function is as follows. Ligand for members of the frizzled family of seven transmembrane receptors that functions in the canonical Wnt/beta-catenin signaling pathway. Plays an important role in embryonic development, including dorsal versus ventral patterning during limb development, skeleton development and urogenital tract development. Required for central nervous system (CNS) angiogenesis and blood-brain barrier regulation. In Meleagris gallopavo (Wild turkey), this protein is Protein Wnt-7a (WNT7A).